An 837-amino-acid polypeptide reads, in one-letter code: Protein translocase subunit SecA (837 aa).

ATP-binding positions include Gln-85, 103 to 107 (GEGKT), and Asp-493. Residues Cys-821, Cys-823, Cys-832, and His-833 each coordinate Zn(2+).

Belongs to the SecA family. As to quaternary structure, monomer and homodimer. Part of the essential Sec protein translocation apparatus which comprises SecA, SecYEG and auxiliary proteins SecDF. Other proteins may also be involved. The cofactor is Zn(2+).

It localises to the cell membrane. The protein localises to the cytoplasm. It catalyses the reaction ATP + H2O + cellular proteinSide 1 = ADP + phosphate + cellular proteinSide 2.. Part of the Sec protein translocase complex. Interacts with the SecYEG preprotein conducting channel. Has a central role in coupling the hydrolysis of ATP to the transfer of proteins into and across the cell membrane, serving as an ATP-driven molecular motor driving the stepwise translocation of polypeptide chains across the membrane. The sequence is that of Protein translocase subunit SecA from Streptococcus pneumoniae serotype 2 (strain D39 / NCTC 7466).